A 153-amino-acid polypeptide reads, in one-letter code: Large ribosomal subunit protein uL13 (153 aa).

Belongs to the universal ribosomal protein uL13 family. As to quaternary structure, part of the 50S ribosomal subunit.

In terms of biological role, this protein is one of the early assembly proteins of the 50S ribosomal subunit, although it is not seen to bind rRNA by itself. It is important during the early stages of 50S assembly. The polypeptide is Large ribosomal subunit protein uL13 (Azorhizobium caulinodans (strain ATCC 43989 / DSM 5975 / JCM 20966 / LMG 6465 / NBRC 14845 / NCIMB 13405 / ORS 571)).